A 2103-amino-acid polypeptide reads, in one-letter code: Orsellinic acid synthase (2103 aa).

An N-terminal acylcarrier protein transacylase domain (SAT) region spans residues 17–232 (DAVHDLNVRS…KRPELAHATI (216 aa)). The Ketosynthase family 3 (KS3) domain occupies 348–782 (ADAIAVVGMS…GGNVSMLLQD (435 aa)). Residues cysteine 525, histidine 660, and histidine 702 each act as for beta-ketoacyl synthase activity in the active site. Residues 881-1197 (VFTFTGQGAQ…RRGGDDWQSV (317 aa)) are malonyl-CoA:ACP transacylase (MAT) domain. Serine 973 (for acyl/malonyl transferase activity) is an active-site residue. The N-terminal hotdog fold stretch occupies residues 1272–1409 (HAVEKLQREE…GQPDSAVRRD (138 aa)). A PKS/mFAS DH domain is found at 1272-1582 (HAVEKLQREE…FKKLERDFFA (311 aa)). Residues 1303-1579 (GHVVDESAIC…DICFKKLERD (277 aa)) are product template (PT) domain. Histidine 1304 functions as the Proton acceptor; for dehydratase activity in the catalytic mechanism. Residues 1433 to 1582 (VHAMDTALFY…FKKLERDFFA (150 aa)) are C-terminal hotdog fold. Aspartate 1493 functions as the Proton donor; for dehydratase activity in the catalytic mechanism. The interval 1592 to 1638 (STKPVAAAPAKSMAKRARQLAPSPSPSSSSGSNTPMSRSPTPSSVSD) is disordered. 2 stretches are compositionally biased toward low complexity: residues 1594–1603 (KPVAAAPAKS) and 1617–1631 (PSSS…SRSP). Carrier domains follow at residues 1640 to 1716 (VDLG…GGSA) and 1741 to 1815 (PAPS…DDDA). An O-(pantetheine 4'-phosphoryl)serine modification is found at serine 1676. The disordered stretch occupies residues 1722-1743 (EDITKPTPSPEQTQARKQGPAP). Residue serine 1775 is modified to O-(pantetheine 4'-phosphoryl)serine. Residues 1809 to 1838 (EALDDDAEEESAPAQTSTNPAKETTIDSSR) form a disordered region. Residues 1810 to 1819 (ALDDDAEEES) show a composition bias toward acidic residues. Polar residues predominate over residues 1823–1836 (QTSTNPAKETTIDS). Residues 1849 to 2082 (ASYIHLKALP…TVNGDHFSMM (234 aa)) are thioesterase (TE) domain.

It carries out the reaction 3 malonyl-CoA + acetyl-CoA + 2 H(+) = orsellinate + 3 CO2 + 4 CoA. The protein operates within secondary metabolite biosynthesis. Non-reducing polyketide synthase; part of the gene cluster that mediates the biosynthesis of orsellinic acid, as well as of the cathepsin K inhibitors F9775 A and F9775 B. The non-reducing polyketide synthase orsA produces orsellinic acid by condensing acetyl-CoA with 3 malonyl-CoA units. Further modifications by the decarboxylase orsB and the tyrosinase-like protein orsC lead to the production of F9775 A and F9775 B. The functions of orsD and orsE remain unclear since only orsB and orsC are required to convert orsellinic acid into F9775 A and F9775 B. This chain is Orsellinic acid synthase, found in Emericella nidulans (strain FGSC A4 / ATCC 38163 / CBS 112.46 / NRRL 194 / M139) (Aspergillus nidulans).